Here is a 359-residue protein sequence, read N- to C-terminus: UPF0284 protein MTH_1426 (359 aa).

Belongs to the UPF0284 family.

The protein is UPF0284 protein MTH_1426 of Methanothermobacter thermautotrophicus (strain ATCC 29096 / DSM 1053 / JCM 10044 / NBRC 100330 / Delta H) (Methanobacterium thermoautotrophicum).